Consider the following 464-residue polypeptide: UNC93-like protein 3 (464 aa).

Transmembrane regions (helical) follow at residues 31–51 (VHIL…AQNL), 62–82 (ISLG…SLVV), 84–104 (LMGS…FVAA), 110–130 (WFTM…IWVG), 160–180 (EFWA…LALL), 192–212 (TLLM…MFFI), 251–271 (LLIV…WAEF), 275–295 (IVTP…YGAL), 313–333 (ITFI…WLLL), 341–361 (VLGT…DGIL), and 392–412 (IAIV…IVML).

Belongs to the unc-93 family.

It localises to the membrane. This is UNC93-like protein 3 from Arabidopsis thaliana (Mouse-ear cress).